Consider the following 134-residue polypeptide: Lymphocyte antigen 6F (134 aa).

An N-terminal signal peptide occupies residues 1–26 (MDSCHTTKSCVLILLVVLLCAERAQG). Residues 27–119 (LECYNCLGVS…TGGSTWTMTR (93 aa)) enclose the UPAR/Ly6 domain. Disulfide bonds link cysteine 29–cysteine 53, cysteine 32–cysteine 41, cysteine 46–cysteine 74, cysteine 78–cysteine 98, and cysteine 99–cysteine 104. Residue glycine 112 is the site of GPI-anchor amidated glycine attachment. A propeptide spans 113–134 (STWTMTRVLLLNLGSVFLQTLL) (removed in mature form).

Its subcellular location is the cell membrane. The sequence is that of Lymphocyte antigen 6F (Ly6f) from Mus musculus (Mouse).